Reading from the N-terminus, the 331-residue chain is RNA 3'-terminal phosphate cyclase (331 aa).

Residues Q100 and 276–280 (HLADQ) each bind ATP. H301 serves as the catalytic Tele-AMP-histidine intermediate.

This sequence belongs to the RNA 3'-terminal cyclase family. Type 1 subfamily.

It is found in the cytoplasm. The catalysed reaction is a 3'-end 3'-phospho-ribonucleotide-RNA + ATP = a 3'-end 2',3'-cyclophospho-ribonucleotide-RNA + AMP + diphosphate. Catalyzes the conversion of 3'-phosphate to a 2',3'-cyclic phosphodiester at the end of RNA. The mechanism of action of the enzyme occurs in 3 steps: (A) adenylation of the enzyme by ATP; (B) transfer of adenylate to an RNA-N3'P to produce RNA-N3'PP5'A; (C) and attack of the adjacent 2'-hydroxyl on the 3'-phosphorus in the diester linkage to produce the cyclic end product. The biological role of this enzyme is unknown but it is likely to function in some aspects of cellular RNA processing. The sequence is that of RNA 3'-terminal phosphate cyclase from Methanosarcina barkeri (strain Fusaro / DSM 804).